A 795-amino-acid polypeptide reads, in one-letter code: Phenylalanine--tRNA ligase beta subunit (795 aa).

Residues 39–148 (AGSFHGVVVG…ADAPIGTDIR (110 aa)) enclose the tRNA-binding domain. In terms of domain architecture, B5 spans 401-476 (PKRATITLRR…RVYGYNNIPD (76 aa)). Residues Asp454, Asp460, Glu463, and Glu464 each coordinate Mg(2+). Residues 701–794 (SRFPANRRDI…LKERFQASLR (94 aa)) enclose the FDX-ACB domain.

This sequence belongs to the phenylalanyl-tRNA synthetase beta subunit family. Type 1 subfamily. As to quaternary structure, tetramer of two alpha and two beta subunits. Mg(2+) serves as cofactor.

It localises to the cytoplasm. It carries out the reaction tRNA(Phe) + L-phenylalanine + ATP = L-phenylalanyl-tRNA(Phe) + AMP + diphosphate + H(+). This Shigella sonnei (strain Ss046) protein is Phenylalanine--tRNA ligase beta subunit.